Reading from the N-terminus, the 539-residue chain is Chaperonin GroEL 1 (539 aa).

ATP contacts are provided by residues Thr29 to Pro32, Asp86 to Thr90, Gly413, and Asp493.

This sequence belongs to the chaperonin (HSP60) family. In terms of assembly, forms a cylinder of 14 subunits composed of two heptameric rings stacked back-to-back. Interacts with the co-chaperonin GroES.

The protein resides in the cytoplasm. It carries out the reaction ATP + H2O + a folded polypeptide = ADP + phosphate + an unfolded polypeptide.. Functionally, together with its co-chaperonin GroES, plays an essential role in assisting protein folding. The GroEL-GroES system forms a nano-cage that allows encapsulation of the non-native substrate proteins and provides a physical environment optimized to promote and accelerate protein folding. This chain is Chaperonin GroEL 1, found in Acidothermus cellulolyticus (strain ATCC 43068 / DSM 8971 / 11B).